The chain runs to 166 residues: D-aminoacyl-tRNA deacylase (166 aa).

Positions Gly142–Pro143 match the Gly-cisPro motif, important for rejection of L-amino acids motif.

It belongs to the DTD family. As to quaternary structure, homodimer.

It is found in the cytoplasm. It carries out the reaction glycyl-tRNA(Ala) + H2O = tRNA(Ala) + glycine + H(+). The catalysed reaction is a D-aminoacyl-tRNA + H2O = a tRNA + a D-alpha-amino acid + H(+). Functionally, an aminoacyl-tRNA editing enzyme that deacylates mischarged D-aminoacyl-tRNAs. Also deacylates mischarged glycyl-tRNA(Ala), protecting cells against glycine mischarging by AlaRS. Acts via tRNA-based rather than protein-based catalysis; rejects L-amino acids rather than detecting D-amino acids in the active site. By recycling D-aminoacyl-tRNA to D-amino acids and free tRNA molecules, this enzyme counteracts the toxicity associated with the formation of D-aminoacyl-tRNA entities in vivo and helps enforce protein L-homochirality. The polypeptide is D-aminoacyl-tRNA deacylase (Ralstonia nicotianae (strain ATCC BAA-1114 / GMI1000) (Ralstonia solanacearum)).